We begin with the raw amino-acid sequence, 75 residues long: Conotoxin Vn5.6 (75 aa).

A signal peptide spans 1–19 (MLCLPVFIILLLLASPAAP). The propeptide occupies 20-59 (NPLEKRIQSDLIRAALEDADMKTGEREILNIIDSISDVAK). Residue glutamine 60 is modified to Pyrrolidone carboxylic acid.

The protein belongs to the conotoxin T superfamily. In terms of processing, contains 2 disulfide bonds that can be either 'C1-C3, C2-C4' or 'C1-C4, C2-C3', since these disulfide connectivities have been observed for conotoxins with cysteine framework V (for examples, see AC P0DQQ7 and AC P81755). As to expression, expressed by the venom duct.

The protein resides in the secreted. This chain is Conotoxin Vn5.6, found in Conus ventricosus (Mediterranean cone).